We begin with the raw amino-acid sequence, 100 residues long: UPF0248 protein APE_0939 (100 aa).

It belongs to the UPF0248 family.

This is UPF0248 protein APE_0939 from Aeropyrum pernix (strain ATCC 700893 / DSM 11879 / JCM 9820 / NBRC 100138 / K1).